The primary structure comprises 223 residues: Putative N-acetylmannosamine-6-phosphate 2-epimerase (223 aa).

Belongs to the NanE family.

It catalyses the reaction an N-acyl-D-glucosamine 6-phosphate = an N-acyl-D-mannosamine 6-phosphate. It participates in amino-sugar metabolism; N-acetylneuraminate degradation; D-fructose 6-phosphate from N-acetylneuraminate: step 3/5. In terms of biological role, converts N-acetylmannosamine-6-phosphate (ManNAc-6-P) to N-acetylglucosamine-6-phosphate (GlcNAc-6-P). The chain is Putative N-acetylmannosamine-6-phosphate 2-epimerase from Staphylococcus haemolyticus (strain JCSC1435).